A 149-amino-acid polypeptide reads, in one-letter code: SKP1-like protein 14 (149 aa).

The interval 91–149 (LLAANYLNIKGLLDLSAQTVADRIKDKTPEEIREIFNIENDFTPEEEAAVRKENAWAFE) is interaction with the F-box domain of F-box proteins.

Belongs to the SKP1 family. In terms of assembly, part of a SCF (SKP1-cullin-F-box) protein ligase complex. Interacts with CPR1/CPR30, At3g61590, At4g39550 and At5g49610. Restricted to inflorescences, pollen and leaves.

It is found in the nucleus. It functions in the pathway protein modification; protein ubiquitination. Functionally, involved in ubiquitination and subsequent proteasomal degradation of target proteins. Together with CUL1, RBX1 and a F-box protein, it forms a SCF E3 ubiquitin ligase complex. The functional specificity of this complex depends on the type of F-box protein. In the SCF complex, it serves as an adapter that links the F-box protein to CUL1. This Arabidopsis thaliana (Mouse-ear cress) protein is SKP1-like protein 14 (ASK14).